The following is a 333-amino-acid chain: Lipoyl synthase (333 aa).

A disordered region spans residues 1–29 (MTDSASGASAVANIATPSNEPYDATRKQK). [4Fe-4S] cluster contacts are provided by C80, C85, C91, C106, C110, C113, and S320. One can recognise a Radical SAM core domain in the interval 91-309 (CFGKGTATFM…EEKAYEMGFT (219 aa)).

This sequence belongs to the radical SAM superfamily. Lipoyl synthase family. The cofactor is [4Fe-4S] cluster.

It localises to the cytoplasm. It carries out the reaction [[Fe-S] cluster scaffold protein carrying a second [4Fe-4S](2+) cluster] + N(6)-octanoyl-L-lysyl-[protein] + 2 oxidized [2Fe-2S]-[ferredoxin] + 2 S-adenosyl-L-methionine + 4 H(+) = [[Fe-S] cluster scaffold protein] + N(6)-[(R)-dihydrolipoyl]-L-lysyl-[protein] + 4 Fe(3+) + 2 hydrogen sulfide + 2 5'-deoxyadenosine + 2 L-methionine + 2 reduced [2Fe-2S]-[ferredoxin]. It functions in the pathway protein modification; protein lipoylation via endogenous pathway; protein N(6)-(lipoyl)lysine from octanoyl-[acyl-carrier-protein]: step 2/2. Catalyzes the radical-mediated insertion of two sulfur atoms into the C-6 and C-8 positions of the octanoyl moiety bound to the lipoyl domains of lipoate-dependent enzymes, thereby converting the octanoylated domains into lipoylated derivatives. The protein is Lipoyl synthase of Ralstonia nicotianae (strain ATCC BAA-1114 / GMI1000) (Ralstonia solanacearum).